A 510-amino-acid chain; its full sequence is ATP synthase subunit alpha (510 aa).

170-177 is an ATP binding site; the sequence is GDRQTGKT.

It belongs to the ATPase alpha/beta chains family. As to quaternary structure, F-type ATPases have 2 components, CF(1) - the catalytic core - and CF(0) - the membrane proton channel. CF(1) has five subunits: alpha(3), beta(3), gamma(1), delta(1), epsilon(1). CF(0) has three main subunits: a(1), b(2) and c(9-12). The alpha and beta chains form an alternating ring which encloses part of the gamma chain. CF(1) is attached to CF(0) by a central stalk formed by the gamma and epsilon chains, while a peripheral stalk is formed by the delta and b chains.

The protein resides in the cell inner membrane. The enzyme catalyses ATP + H2O + 4 H(+)(in) = ADP + phosphate + 5 H(+)(out). Produces ATP from ADP in the presence of a proton gradient across the membrane. The alpha chain is a regulatory subunit. This chain is ATP synthase subunit alpha, found in Caulobacter sp. (strain K31).